An 855-amino-acid chain; its full sequence is Valine--tRNA ligase (855 aa).

Positions 42–52 (PTISGKLHIGH) match the 'HIGH' region motif. The 'KMSKS' region motif lies at 574 to 578 (KMSKS). Lys577 contributes to the ATP binding site.

Belongs to the class-I aminoacyl-tRNA synthetase family. ValS type 2 subfamily. As to quaternary structure, monomer.

It is found in the cytoplasm. The enzyme catalyses tRNA(Val) + L-valine + ATP = L-valyl-tRNA(Val) + AMP + diphosphate. In terms of biological role, catalyzes the attachment of valine to tRNA(Val). As ValRS can inadvertently accommodate and process structurally similar amino acids such as threonine, to avoid such errors, it has a 'posttransfer' editing activity that hydrolyzes mischarged Thr-tRNA(Val) in a tRNA-dependent manner. This Wolbachia sp. subsp. Brugia malayi (strain TRS) protein is Valine--tRNA ligase.